The primary structure comprises 208 residues: Sec-independent protein translocase protein TatB (208 aa).

Residues 1 to 21 (MFDIGVGELTLIAVVALVVLG) traverse the membrane as a helical segment. Residues 178 to 189 (APEPVAVAPVDA) are compositionally biased toward low complexity. Residues 178–208 (APEPVAVAPVDAGTPAAWTPSAPAKLQEKQP) form a disordered region.

It belongs to the TatB family. In terms of assembly, the Tat system comprises two distinct complexes: a TatABC complex, containing multiple copies of TatA, TatB and TatC subunits, and a separate TatA complex, containing only TatA subunits. Substrates initially bind to the TatABC complex, which probably triggers association of the separate TatA complex to form the active translocon.

The protein localises to the cell inner membrane. In terms of biological role, part of the twin-arginine translocation (Tat) system that transports large folded proteins containing a characteristic twin-arginine motif in their signal peptide across membranes. Together with TatC, TatB is part of a receptor directly interacting with Tat signal peptides. TatB may form an oligomeric binding site that transiently accommodates folded Tat precursor proteins before their translocation. The protein is Sec-independent protein translocase protein TatB of Xanthomonas euvesicatoria pv. vesicatoria (strain 85-10) (Xanthomonas campestris pv. vesicatoria).